A 304-amino-acid chain; its full sequence is MQSQPDNVAYPMELQAVNKDGTVEVRVQGNDDSSNRKHEVAEAQEKPVGGINFWAPRELRLNYRDYMGELLGTFVLLFMGNGVVATVIIDGKLGFLSITLGWGIAVTMALYVSLGISSGHLNPAVTVGNAVFGDFPWRKVPGYIAAQMLGAFLGAACAYGVFADLLKAHGGGELIAFGEKGTAGVFSTYPRDSNGLFSCIFGEFICTAMLLFCVCGIFDPNNSPAKGHEPLAVGALVFAIGNNIGYSTGYAINPARDFGPRVFSSFLYGGEVFSHANYYFWVPLVIPLFGGIFGLFLYKYFVPH.

Topologically, residues 1–68 (MQSQPDNVAY…LRLNYRDYMG (68 aa)) are cytoplasmic. The helical transmembrane segment at 69–89 (ELLGTFVLLFMGNGVVATVII) threads the bilayer. Residues 90 to 95 (DGKLGF) lie on the Extracellular side of the membrane. The helical transmembrane segment at 96-116 (LSITLGWGIAVTMALYVSLGI) threads the bilayer. The Cytoplasmic segment spans residues 117–142 (SSGHLNPAVTVGNAVFGDFPWRKVPG). A helical transmembrane segment spans residues 143 to 163 (YIAAQMLGAFLGAACAYGVFA). The Extracellular portion of the chain corresponds to 164 to 196 (DLLKAHGGGELIAFGEKGTAGVFSTYPRDSNGL). A helical membrane pass occupies residues 197–217 (FSCIFGEFICTAMLLFCVCGI). Topologically, residues 218 to 231 (FDPNNSPAKGHEPL) are cytoplasmic. The helical transmembrane segment at 232-252 (AVGALVFAIGNNIGYSTGYAI) threads the bilayer. At 253–277 (NPARDFGPRVFSSFLYGGEVFSHAN) the chain is on the extracellular side. A helical transmembrane segment spans residues 278-298 (YYFWVPLVIPLFGGIFGLFLY). The Cytoplasmic portion of the chain corresponds to 299–304 (KYFVPH).

The protein belongs to the MIP/aquaporin (TC 1.A.8) family.

It is found in the cell membrane. The enzyme catalyses glycerol(in) = glycerol(out). It carries out the reaction H2O(in) = H2O(out). The catalysed reaction is urea(in) = urea(out). Its function is as follows. Mediates water and glycerol transport across the cell membrane. Permeable to urea. Permeable to methylamine/methylammonium. Permeable to dihydroxyacetone. Permeable to erythritol and ribitol. The chain is Aquaglyceroporin-3 from Trypanosoma brucei brucei.